Here is a 367-residue protein sequence, read N- to C-terminus: Innexin inx2 (367 aa).

The Cytoplasmic portion of the chain corresponds to 1-22 (MFDVFGSVKGLLKIDQVCIDNN). Residues 23 to 43 (VFRMHYKATVIILIAFSLLVT) traverse the membrane as a helical segment. Over 44–109 (SRQYIGDPID…EDEVKYHKYY (66 aa)) the chain is Extracellular. Residues 110–130 (QWVCFVLFFQAILFYVPRYLW) traverse the membrane as a helical segment. Residues 130–179 (WKSWEGGRLKMLVMDLNSPIVNDECKNDRKKILVDYFIGNLNRHNFYAFR) are interaction with shg. The Cytoplasmic segment spans residues 131–179 (KSWEGGRLKMLVMDLNSPIVNDECKNDRKKILVDYFIGNLNRHNFYAFR). A helical membrane pass occupies residues 180-200 (FFVCEALNFVNVIGQIYFVDF). Residues 201-266 (FLDGEFSTYG…VLPLNIVNEK (66 aa)) are Extracellular-facing. A helical transmembrane segment spans residues 267–287 (IYVFLWFWFIILSIMSGISLI). Over 288 to 367 (YRIAVVAGPK…HSAHKRPFDA (80 aa)) the chain is Cytoplasmic.

The protein belongs to the pannexin family. Monomer and heterooligomer with ogre or Inx3 (via cytoplasmic C-terminal region). Interacts (via cytoplasmic loop) with shg (via cytoplasmic region). Interacts with arm. As to expression, in ovary, expressed in inner germarial sheath cells, prefollicular cells, follicle cells, nurse cells and oocytes. Expressed in embryonic epithelial cells. Expressed in foregut and hindgut from stage 11-17, segmentally repeated tracheal placodes at stage 14, salivary gland at stage 16 and proventriculus at stage 16-17 (at protein level). During germband extension stage (stage 7), expressed in epidermal epithelial cells. Expressed in cephalic furrow. Repeating epidermal pattern emerges at stage 11, refines to one or two cells at each side of the segment borders by stage 13. Expressed in the imaginal wing disk. In pupae, expressed in the CNS and in primary, secondary and tertiary pigment cells of the retina. Expressed in optic lamina of the adult CNS.

The protein resides in the cell membrane. Its subcellular location is the cell junction. It is found in the gap junction. The protein localises to the cytoplasm. It localises to the apical cell membrane. The protein resides in the apicolateral cell membrane. Its subcellular location is the basolateral cell membrane. It is found in the lateral cell membrane. Structural components of the gap junctions. Involved in gap junctional communication between germline and somatic cells which is essential for normal oogenesis. In embryonic epidermis, required for epithelial morphogenesis. Required for keyhole formation during early stages of proventriculus development in response to wg signaling. In follicle cells, promotes the formation of egg chambers in part through regulation of shg and baz at the boundary between germ cells and follicle cells. In inner germarial sheath cells, required for survival of early germ cells and for cyst formation. This is Innexin inx2 (Inx2) from Drosophila melanogaster (Fruit fly).